Reading from the N-terminus, the 185-residue chain is Ribosome-recycling factor (185 aa).

The interval 136–159 (NEQLKSQQKDGKMSEDELKRSQDE) is disordered.

The protein belongs to the RRF family.

The protein resides in the cytoplasm. Its function is as follows. Responsible for the release of ribosomes from messenger RNA at the termination of protein biosynthesis. May increase the efficiency of translation by recycling ribosomes from one round of translation to another. This is Ribosome-recycling factor from Pelotomaculum thermopropionicum (strain DSM 13744 / JCM 10971 / SI).